Here is a 267-residue protein sequence, read N- to C-terminus: Enolase-phosphatase E1 (267 aa).

Asp-11 and Glu-13 together coordinate Mg(2+). Residues 155–156 and Lys-189 each bind substrate; that span reads SS. Asp-215 serves as a coordination point for Mg(2+).

Belongs to the HAD-like hydrolase superfamily. MasA/MtnC family. As to quaternary structure, monomer. Requires Mg(2+) as cofactor.

The protein localises to the cytoplasm. It localises to the nucleus. It carries out the reaction 5-methylsulfanyl-2,3-dioxopentyl phosphate + H2O = 1,2-dihydroxy-5-(methylsulfanyl)pent-1-en-3-one + phosphate. Its pathway is amino-acid biosynthesis; L-methionine biosynthesis via salvage pathway; L-methionine from S-methyl-5-thio-alpha-D-ribose 1-phosphate: step 3/6. The protein operates within amino-acid biosynthesis; L-methionine biosynthesis via salvage pathway; L-methionine from S-methyl-5-thio-alpha-D-ribose 1-phosphate: step 4/6. Its function is as follows. Bifunctional enzyme that catalyzes the enolization of 2,3-diketo-5-methylthiopentyl-1-phosphate (DK-MTP-1-P) into the intermediate 2-hydroxy-3-keto-5-methylthiopentenyl-1-phosphate (HK-MTPenyl-1-P), which is then dephosphorylated to form the acireductone 1,2-dihydroxy-3-keto-5-methylthiopentene (DHK-MTPene). The chain is Enolase-phosphatase E1 (enoph1) from Dictyostelium discoideum (Social amoeba).